A 291-amino-acid chain; its full sequence is Cell division control protein 2 homolog 1 (291 aa).

One can recognise a Protein kinase domain in the interval 1 to 284 (GENVEKIGEG…ARSAVEHEYF (284 aa)). ATP-binding positions include 7-15 (IGEGTYGVV) and K30. The residue at position 11 (T11) is a Phosphothreonine. Y12 is subject to Phosphotyrosine. The Proton acceptor role is filled by D124. T158 bears the Phosphothreonine; by CAK mark.

This sequence belongs to the protein kinase superfamily. CMGC Ser/Thr protein kinase family. CDC2/CDKX subfamily. In terms of tissue distribution, found in most organs including root, young leaf, stem, vegetative meristem and flower bud.

It carries out the reaction L-seryl-[protein] + ATP = O-phospho-L-seryl-[protein] + ADP + H(+). The catalysed reaction is L-threonyl-[protein] + ATP = O-phospho-L-threonyl-[protein] + ADP + H(+). The enzyme catalyses [DNA-directed RNA polymerase] + ATP = phospho-[DNA-directed RNA polymerase] + ADP + H(+). Phosphorylation at Thr-11 or Tyr-12 inactivates the enzyme, while phosphorylation at Thr-158 activates it. Its function is as follows. Plays a key role in the control of the eukaryotic cell cycle. Component of the kinase complex that phosphorylates the repetitive C-terminus of RNA polymerase II. This is Cell division control protein 2 homolog 1 (CDC2A) from Medicago sativa (Alfalfa).